A 457-amino-acid polypeptide reads, in one-letter code: Argininosuccinate lyase (457 aa).

It belongs to the lyase 1 family. Argininosuccinate lyase subfamily.

It localises to the cytoplasm. It carries out the reaction 2-(N(omega)-L-arginino)succinate = fumarate + L-arginine. The protein operates within amino-acid biosynthesis; L-arginine biosynthesis; L-arginine from L-ornithine and carbamoyl phosphate: step 3/3. This Shigella sonnei (strain Ss046) protein is Argininosuccinate lyase.